We begin with the raw amino-acid sequence, 117 residues long: Large ribosomal subunit protein bL20 (117 aa).

This sequence belongs to the bacterial ribosomal protein bL20 family.

Binds directly to 23S ribosomal RNA and is necessary for the in vitro assembly process of the 50S ribosomal subunit. It is not involved in the protein synthesizing functions of that subunit. This is Large ribosomal subunit protein bL20 from Vibrio atlanticus (strain LGP32) (Vibrio splendidus (strain Mel32)).